Consider the following 533-residue polypeptide: Cytochrome P450 monooxygenase calL (533 aa).

A helical membrane pass occupies residues T8–P28. The N-linked (GlcNAc...) asparagine glycan is linked to N33. The disordered stretch occupies residues G123–R148. A glycan (N-linked (GlcNAc...) asparagine) is linked at N388. Heme is bound at residue C467.

It belongs to the cytochrome P450 family. It depends on heme as a cofactor.

Its subcellular location is the membrane. The protein operates within secondary metabolite biosynthesis. Functionally, cytochrome P450 monooxygenase; part of the gene cluster that mediates the biosynthesis of calbistrin A and related compounds. Calbistrin A is a secondary metabolite with an interesting structure that was recently found to have bioactivity against leukemia cells. It consists of two polyketides linked by an ester bond: a bicyclic decalin containing polyketide and a linear 12 carbon dioic acid structure. The polyketide synthase calA is probably responsible for forming the decalin moiety. Because calA lacks a designated enoylreductase (ER) domain, the required activity is provided by the trans-enoyl reductase calK. Following release from the PKS, calF then probably catalyzes the oxidation and the subsequent Diels Alder cycloisomerization that lead to the formation of the decalin moiety. The decalin polyketide backbone includes two C-methyl groups, at C7 and C11 in backbone, of which the C7 position is probably methylated by the methyltransferase domain of calA. A candidate for adding the methyl group at C11, if not done by CalA, is the cluster methyltransferase calH. Several additional tailoring enzymes within the cluster could be involved in the modification of the decalin polyketide product. Those include the 3 cytochrome P450 monooxygenases CalE, CalG and CalL, of which one might be responsible for the introduction of the extra hydroxyl group attached to the backbone of the decalin moiety, at position C9 in the backbone, that allows for attachment of the linear moiety. One tailoring enzyme activity that is expected to be involved in biosynthesis of calbistrin is an acyltransferase for connecting the two polyketide synthase products, and which could be performed by the cluster acyltransferase calJ. The enzyme responsible for the biosynthesis of the linear moiety, probably a second PKS, has not been identified yet. This chain is Cytochrome P450 monooxygenase calL, found in Penicillium decumbens.